The following is a 351-amino-acid chain: Holliday junction branch migration complex subunit RuvB (351 aa).

Residues 4–185 form a large ATPase domain (RuvB-L) region; it reads HDRELVSPEA…FGFVAHMDFY (182 aa). ATP-binding positions include Leu-24, Arg-25, Gly-66, Lys-69, Thr-70, Thr-71, 132–134, Arg-175, Tyr-185, and Arg-222; that span reads EDF. Thr-70 is a Mg(2+) binding site. The small ATPAse domain (RuvB-S) stretch occupies residues 186 to 256; the sequence is SPEELELILH…CARAALSLYE (71 aa). The interval 259–351 is head domain (RuvB-H); the sequence is DEGLDRLDRA…AALFDPDEEP (93 aa). 2 residues coordinate DNA: Arg-314 and Arg-319.

The protein belongs to the RuvB family. In terms of assembly, homohexamer. Forms an RuvA(8)-RuvB(12)-Holliday junction (HJ) complex. HJ DNA is sandwiched between 2 RuvA tetramers; dsDNA enters through RuvA and exits via RuvB. An RuvB hexamer assembles on each DNA strand where it exits the tetramer. Each RuvB hexamer is contacted by two RuvA subunits (via domain III) on 2 adjacent RuvB subunits; this complex drives branch migration. In the full resolvosome a probable DNA-RuvA(4)-RuvB(12)-RuvC(2) complex forms which resolves the HJ.

It localises to the cytoplasm. The catalysed reaction is ATP + H2O = ADP + phosphate + H(+). The RuvA-RuvB-RuvC complex processes Holliday junction (HJ) DNA during genetic recombination and DNA repair, while the RuvA-RuvB complex plays an important role in the rescue of blocked DNA replication forks via replication fork reversal (RFR). RuvA specifically binds to HJ cruciform DNA, conferring on it an open structure. The RuvB hexamer acts as an ATP-dependent pump, pulling dsDNA into and through the RuvAB complex. RuvB forms 2 homohexamers on either side of HJ DNA bound by 1 or 2 RuvA tetramers; 4 subunits per hexamer contact DNA at a time. Coordinated motions by a converter formed by DNA-disengaged RuvB subunits stimulates ATP hydrolysis and nucleotide exchange. Immobilization of the converter enables RuvB to convert the ATP-contained energy into a lever motion, pulling 2 nucleotides of DNA out of the RuvA tetramer per ATP hydrolyzed, thus driving DNA branch migration. The RuvB motors rotate together with the DNA substrate, which together with the progressing nucleotide cycle form the mechanistic basis for DNA recombination by continuous HJ branch migration. Branch migration allows RuvC to scan DNA until it finds its consensus sequence, where it cleaves and resolves cruciform DNA. This chain is Holliday junction branch migration complex subunit RuvB, found in Thermobifida fusca (strain YX).